The sequence spans 264 residues: MEHTTTHNNDPLVLGGRALESRLFIGTGKYGSDSLIPRVAEASGAQVITVALRRVDMQAAAGNVMQHIPQHMQLLPNTSGARTAEEAVRIARLARAAGCGDWIKIEVISDSRYLLPDGYETAKATEILARDGFVVLPYMNPDLYVARDLVSAGAAAVMPLGAPIGTNRGLRTQEMIGILIEEIELPVIVDAGIGRPSQACEAMEMGAAACLVNTAIASAGDPVLMASAFGAAVRAGRRAWLAGTGAVLEGQAQASSPLLGFLDS.

Lysine 104 serves as the catalytic Schiff-base intermediate with DXP. Residues glycine 165, 191 to 192, and 213 to 214 contribute to the 1-deoxy-D-xylulose 5-phosphate site; these read AG and NT.

Belongs to the ThiG family. Homotetramer. Forms heterodimers with either ThiH or ThiS.

The protein localises to the cytoplasm. The catalysed reaction is [ThiS sulfur-carrier protein]-C-terminal-Gly-aminoethanethioate + 2-iminoacetate + 1-deoxy-D-xylulose 5-phosphate = [ThiS sulfur-carrier protein]-C-terminal Gly-Gly + 2-[(2R,5Z)-2-carboxy-4-methylthiazol-5(2H)-ylidene]ethyl phosphate + 2 H2O + H(+). It participates in cofactor biosynthesis; thiamine diphosphate biosynthesis. In terms of biological role, catalyzes the rearrangement of 1-deoxy-D-xylulose 5-phosphate (DXP) to produce the thiazole phosphate moiety of thiamine. Sulfur is provided by the thiocarboxylate moiety of the carrier protein ThiS. In vitro, sulfur can be provided by H(2)S. This is Thiazole synthase from Oleidesulfovibrio alaskensis (strain ATCC BAA-1058 / DSM 17464 / G20) (Desulfovibrio alaskensis).